The following is a 96-amino-acid chain: Dynein light chain roadblock-type 1 (96 aa).

Alanine 2 carries the post-translational modification N-acetylalanine.

The protein belongs to the GAMAD family. Homodimer. The cytoplasmic dynein 1 complex consists of two catalytic heavy chains (HCs) and a number of non-catalytic subunits presented by intermediate chains (ICs), light intermediate chains (LICs) and light chains (LCs); the composition seems to vary in respect to the IC, LIC and LC composition. The heavy chain homodimer serves as a scaffold for the probable homodimeric assembly of the respective non-catalytic subunits. The ICs and LICs bind directly to the HC dimer and the LCs assemble on the IC dimer. Interacts with DYNLRB2. Interacts with DYNC1I1 and DYNC1I2. Interacts with RAB6A isoform 1 (GTP-bound); the interaction is direct. Interacts with RAB6A isoform 2 (GDP-bound); the interaction is direct. Interacts with RAB6B (GDP-bound). High expression in heart, liver, brain and pancreas; moderate in placenta, skeletal muscle and kidney; low in lung, prostate, testis, small intestine and colon. Isoform 1 expression is up-regulated in 64% hepatocellular carcinoma (HCC) patients.

It localises to the cytoplasm. It is found in the cytoskeleton. Its function is as follows. Acts as one of several non-catalytic accessory components of the cytoplasmic dynein 1 complex that are thought to be involved in linking dynein to cargos and to adapter proteins that regulate dynein function. Cytoplasmic dynein 1 acts as a motor for the intracellular retrograde motility of vesicles and organelles along microtubules. The protein is Dynein light chain roadblock-type 1 of Homo sapiens (Human).